We begin with the raw amino-acid sequence, 299 residues long: Oxygen-dependent coproporphyrinogen-III oxidase (299 aa).

Residue Ser92 participates in substrate binding. Positions 96 and 106 each coordinate a divalent metal cation. His106 acts as the Proton donor in catalysis. 108 to 110 serves as a coordination point for substrate; sequence NVR. Residues His145 and His175 each coordinate a divalent metal cation. The segment at 240–275 is important for dimerization; sequence YVEFNLVWDRGTLFGLQTGGRTESILMSMPPLVRWE. Substrate is bound at residue 258–260; that stretch reads GGR.

Belongs to the aerobic coproporphyrinogen-III oxidase family. As to quaternary structure, homodimer. It depends on a divalent metal cation as a cofactor.

The protein localises to the cytoplasm. It carries out the reaction coproporphyrinogen III + O2 + 2 H(+) = protoporphyrinogen IX + 2 CO2 + 2 H2O. It functions in the pathway porphyrin-containing compound metabolism; protoporphyrin-IX biosynthesis; protoporphyrinogen-IX from coproporphyrinogen-III (O2 route): step 1/1. Involved in the heme biosynthesis. Catalyzes the aerobic oxidative decarboxylation of propionate groups of rings A and B of coproporphyrinogen-III to yield the vinyl groups in protoporphyrinogen-IX. The sequence is that of Oxygen-dependent coproporphyrinogen-III oxidase from Shigella dysenteriae serotype 1 (strain Sd197).